A 623-amino-acid chain; its full sequence is Trehalase (623 aa).

The protein belongs to the glycosyl hydrolase 15 family. Monomer.

It carries out the reaction alpha,alpha-trehalose + H2O = alpha-D-glucose + beta-D-glucose. Its pathway is glycan degradation; trehalose degradation; D-glucose from alpha,alpha-trehalose: step 1/1. Inhibited by validamycin A. Catalyzes the hydrolysis of alpha,alpha-trehalose into two molecules of D-glucose. The chain is Trehalase from Thermoplasma volcanium (strain ATCC 51530 / DSM 4299 / JCM 9571 / NBRC 15438 / GSS1).